We begin with the raw amino-acid sequence, 397 residues long: S-adenosylmethionine:tRNA ribosyltransferase-isomerase (397 aa).

The protein belongs to the QueA family. In terms of assembly, monomer.

Its subcellular location is the cytoplasm. It carries out the reaction 7-aminomethyl-7-carbaguanosine(34) in tRNA + S-adenosyl-L-methionine = epoxyqueuosine(34) in tRNA + adenine + L-methionine + 2 H(+). It participates in tRNA modification; tRNA-queuosine biosynthesis. In terms of biological role, transfers and isomerizes the ribose moiety from AdoMet to the 7-aminomethyl group of 7-deazaguanine (preQ1-tRNA) to give epoxyqueuosine (oQ-tRNA). The protein is S-adenosylmethionine:tRNA ribosyltransferase-isomerase of Nostoc sp. (strain PCC 7120 / SAG 25.82 / UTEX 2576).